Here is a 305-residue protein sequence, read N- to C-terminus: Aquaporin NIP6-1 (305 aa).

Positions 1–30 (MDHEEIPSTPSTPATTPGTPGAPLFGGFEG) are disordered. Low complexity predominate over residues 7 to 23 (PSTPSTPATTPGTPGAP). Helical transmembrane passes span 82–102 (LGAE…TAIV) and 111–131 (TLIG…LSTG). An NPA 1 motif is present at residues 139 to 141 (NPA). Helical transmembrane passes span 159–179 (VYIG…KAVF), 194–214 (LSQA…VVTA), and 221–241 (AVGE…ILIA). Residues 250 to 252 (NPV) carry the NPA 2 motif. Residues 267 to 287 (IWVYLTAPILGALIGAGTYTI) form a helical membrane-spanning segment. At S302 the chain carries Phosphoserine.

This sequence belongs to the MIP/aquaporin (TC 1.A.8) family. NIP (TC 1.A.8.12) subfamily. In terms of tissue distribution, expressed in roots.

It localises to the membrane. Functionally, transports glycerol, urea and formamide, in Xenopus laevis oocytes. Very low water transport activity. This Arabidopsis thaliana (Mouse-ear cress) protein is Aquaporin NIP6-1 (NIP6-1).